Consider the following 314-residue polypeptide: Vomeronasal type-1 receptor 95 (314 aa).

At 1–18 the chain is on the extracellular side; sequence MNKDNTLYCSAYRIAFFS. The chain crosses the membrane as a helical span at residues 19-39; the sequence is EIGIGISANSCLLLFHTFMFI. Residues 40–48 are Cytoplasmic-facing; it reads RGHRPRLTD. A helical transmembrane segment spans residues 49–69; the sequence is LPIGLVALIHLVMLLLAAYIT. The Extracellular portion of the chain corresponds to 70-88; the sequence is EDFFMSSGGWDDITCKLFI. Cys84 and Cys171 are joined by a disulfide. A helical transmembrane segment spans residues 89–113; the sequence is FLHRFFRSLSVCDTCMLSVFQAIIL. Residues 114 to 133 lie on the Cytoplasmic side of the membrane; sequence CPQSSHLAKFKLNSPHHLSC. The helical transmembrane segment at 134–154 threads the bilayer; the sequence is FFIFMSIFYTSISSHILIAAI. Residues 155 to 186 lie on the Extracellular side of the membrane; the sequence is ATQNLTSVNLIYITKSCSFLPMSSSMQRTFST. N-linked (GlcNAc...) asparagine glycosylation occurs at Asn158. The chain crosses the membrane as a helical span at residues 187–207; the sequence is LLAFRNVFLIGLMGLSTCYMA. Residues 208–235 lie on the Cytoplasmic side of the membrane; the sequence is TLLCRHKTRSQQLQNSKLSPKATPEQRA. A helical transmembrane segment spans residues 236–256; the sequence is IWTILMLMSFFLIISTFDSIM. Residues 257–268 lie on the Extracellular side of the membrane; sequence TYSRTIFQGNQS. A glycan (N-linked (GlcNAc...) asparagine) is linked at Asn266. A helical membrane pass occupies residues 269 to 289; it reads LYCVQIPVAHGYAAFSPLLVL. Residues 290-314 lie on the Cytoplasmic side of the membrane; sequence NNEKRLTSLMISMYDRIVRLESLCS.

It belongs to the G-protein coupled receptor 1 family.

The protein resides in the cell membrane. In terms of biological role, putative pheromone receptor implicated in the regulation of social as well as reproductive behavior. The sequence is that of Vomeronasal type-1 receptor 95 (Vom1r95) from Rattus norvegicus (Rat).